A 245-amino-acid chain; its full sequence is Chymotrypsin B (245 aa).

5 disulfide bridges follow: C1/C121, C42/C58, C135/C201, C167/C182, and C191/C220. A propeptide spanning residues 14–15 (AR) is cleaved from the precursor. A Peptidase S1 domain is found at 16-243 (IVNGEEAVPH…LRGWVDQILA (228 aa)). Catalysis depends on charge relay system residues H57 and D101. S195 (charge relay system) is an active-site residue.

It belongs to the peptidase S1 family.

It localises to the secreted. It is found in the extracellular space. The enzyme catalyses Preferential cleavage: Tyr-|-Xaa, Trp-|-Xaa, Phe-|-Xaa, Leu-|-Xaa.. This chain is Chymotrypsin B, found in Gadus morhua (Atlantic cod).